Here is a 531-residue protein sequence, read N- to C-terminus: Calcium-dependent protein kinase 21 (531 aa).

A compositionally biased stretch (basic residues) spans 1–10 (MGCFSSKHRK). The tract at residues 1 to 62 (MGCFSSKHRK…STPSSNPVSV (62 aa)) is disordered. Gly2 is lipidated: N-myristoyl glycine. The span at 48–60 (IHQQISTPSSNPV) shows a compositional bias: polar residues. The Protein kinase domain maps to 80–338 (YSLGKELGRG…AAQVLEHPWI (259 aa)). Residues 86–94 (LGRGQFGIT) and Lys109 contribute to the ATP site. The active-site Proton acceptor is Asp204. Ser244 is modified (phosphoserine). An autoinhibitory domain region spans residues 343–373 (APDKPIDSAVLSRMKQFRAMNKLKKLALKVI). EF-hand domains follow at residues 380–415 (EEIKGLKTMFANIDTDKSGTITYEELKTGLTRLGSR), 416–451 (LSETEVKQLMEAADVDGNGTIDYYEFISATMHRYKL), 452–487 (DRDEHVYKAFQHFDKDNSGHITRDELESAMKEYGMG), and 488–522 (DEASIKEVISEVDTDNDGRINFEEFCAMMRSGSTQ). Ca(2+) contacts are provided by Asp393, Asp395, Ser397, Thr399, Glu404, Asp429, Asp431, Asn433, Thr435, Glu440, Asp465, Asp467, Ser469, His471, Glu476, Asp500, Asp502, Asp504, Arg506, and Glu511.

It belongs to the protein kinase superfamily. Ser/Thr protein kinase family. CDPK subfamily. In terms of assembly, interacts with SLAC1 and ABI1.

The protein localises to the cell membrane. It catalyses the reaction L-seryl-[protein] + ATP = O-phospho-L-seryl-[protein] + ADP + H(+). It carries out the reaction L-threonyl-[protein] + ATP = O-phospho-L-threonyl-[protein] + ADP + H(+). Its activity is regulated as follows. Activated by calcium. Autophosphorylation may play an important role in the regulation of the kinase activity. Functionally, may play a role in signal transduction pathways that involve calcium as a second messenger. Mediates the phosphorylation and activation of the S-type anion efflux channel SLAC1. The polypeptide is Calcium-dependent protein kinase 21 (CPK21) (Arabidopsis thaliana (Mouse-ear cress)).